The primary structure comprises 385 residues: Cytochrome b (385 aa).

Over 1–27 the chain is Mitochondrial matrix; sequence MAFRKSNVYLSLVNSYIIDSPQPSSIN. Tyrosine 16 contributes to the a ubiquinone binding site. Residues 28-51 form a helical membrane-spanning segment; the sequence is YWWNMGSLLGLCLVIQIVTGIFMA. Residues 52 to 74 are Mitochondrial intermembrane-facing; that stretch reads MHYSSNIELAFSSVEHIMRDVHN. The chain crosses the membrane as a helical span at residues 75-102; the sequence is GYILRYLHANGASFFFMVMFMHMAKGLY. Heme b contacts are provided by histidine 82 and histidine 96. The Mitochondrial matrix portion of the chain corresponds to 103–110; that stretch reads YGSYRSPR. A helical transmembrane segment spans residues 111–135; sequence VTLWNVGVIIFILTIATAFLGYCCV. Topologically, residues 136–172 are mitochondrial intermembrane; the sequence is YGQMSHWGATVITNLFSAIPFVGNDIVSWLWGGFSVS. Residues 173-204 form a helical membrane-spanning segment; it reads NPTIQRFFALHYLVPFIIAAMVIMHLMALHIH. The heme b site is built by histidine 183 and histidine 197. Histidine 202 is an a ubiquinone binding site. Residues 205–223 lie on the Mitochondrial matrix side of the membrane; sequence GSSNPLGITGNLDRIPMHS. A helical transmembrane segment spans residues 224–246; the sequence is YFIFKDLVTVFLFMLILALFVFY. Topologically, residues 247-287 are mitochondrial intermembrane; the sequence is SPNTLGHPDNYIPGNPLVTPASIVPEWYLLPFYAILRSIPD. The chain crosses the membrane as a helical span at residues 288 to 308; sequence KLLGVITMFAAILVLLVLPFT. Over 309–319 the chain is Mitochondrial matrix; that stretch reads DRSVVRGNTFK. Residues 320 to 340 traverse the membrane as a helical segment; the sequence is VLSKFFFFIFVFNFVLLGQIG. Over 341–347 the chain is Mitochondrial intermembrane; sequence ACHVEVP. A helical transmembrane segment spans residues 348–364; sequence YVLMGQIATFIYFAYFL. At 365-385 the chain is on the mitochondrial matrix side; it reads IIVPVISTIENVLFYIGRVNK.

Belongs to the cytochrome b family. In terms of assembly, component of the ubiquinol-cytochrome c oxidoreductase (cytochrome b-c1 complex, complex III, CIII), a multisubunit enzyme composed of 10 subunits. The complex is composed of 3 respiratory subunits cytochrome b (COB), cytochrome c1 (CYT1) and Rieske protein (RIP1), 2 core protein subunits COR1 and QCR2, and 5 low-molecular weight protein subunits QCR6, QCR7, QCR8, QCR9 and QCR10. The complex exists as an obligatory dimer and forms supercomplexes (SCs) in the inner mitochondrial membrane with a monomer or a dimer of cytochrome c oxidase (complex IV, CIV), resulting in 2 different assemblies (supercomplexes III(2)IV and III(2)IV(2)). Heme b serves as cofactor.

It is found in the mitochondrion inner membrane. The enzyme catalyses a quinol + 2 Fe(III)-[cytochrome c](out) = a quinone + 2 Fe(II)-[cytochrome c](out) + 2 H(+)(out). Component of the ubiquinol-cytochrome c oxidoreductase, a multisubunit transmembrane complex that is part of the mitochondrial electron transport chain which drives oxidative phosphorylation. The respiratory chain contains 3 multisubunit complexes succinate dehydrogenase (complex II, CII), ubiquinol-cytochrome c oxidoreductase (cytochrome b-c1 complex, complex III, CIII) and cytochrome c oxidase (complex IV, CIV), that cooperate to transfer electrons derived from NADH and succinate to molecular oxygen, creating an electrochemical gradient over the inner membrane that drives transmembrane transport and the ATP synthase. The cytochrome b-c1 complex catalyzes electron transfer from ubiquinol to cytochrome c, linking this redox reaction to translocation of protons across the mitochondrial inner membrane, with protons being carried across the membrane as hydrogens on the quinol. In the process called Q cycle, 2 protons are consumed from the matrix, 4 protons are released into the intermembrane space and 2 electrons are passed to cytochrome c. Cytochrome b is a catalytic core subunit containing 2 b-type hemes BL and BH topographically segregated in the quinone reduction (Qi) and quinol oxidation (Q0) sites on opposite sides of the membrane. The polypeptide is Cytochrome b (COB) (Saccharomyces cerevisiae (strain ATCC 204508 / S288c) (Baker's yeast)).